Reading from the N-terminus, the 87-residue chain is MPKKPAQSDSTEQSVSFESSLSELESIVTRLESGELPLEDALNEFERGVQLARQGQQKLQQAEQRVQILLNDSADDAALTPFTPDAE.

Belongs to the XseB family. As to quaternary structure, heterooligomer composed of large and small subunits.

It localises to the cytoplasm. The enzyme catalyses Exonucleolytic cleavage in either 5'- to 3'- or 3'- to 5'-direction to yield nucleoside 5'-phosphates.. Its function is as follows. Bidirectionally degrades single-stranded DNA into large acid-insoluble oligonucleotides, which are then degraded further into small acid-soluble oligonucleotides. The chain is Exodeoxyribonuclease 7 small subunit from Serratia proteamaculans (strain 568).